Here is a 139-residue protein sequence, read N- to C-terminus: Phosphoribosyl-AMP cyclohydrolase (139 aa).

Position 92 (D92) interacts with Mg(2+). A Zn(2+)-binding site is contributed by C93. Mg(2+) contacts are provided by D94 and D96. Residues C111 and C118 each contribute to the Zn(2+) site.

This sequence belongs to the PRA-CH family. As to quaternary structure, homodimer. Mg(2+) is required as a cofactor. It depends on Zn(2+) as a cofactor.

It is found in the cytoplasm. It carries out the reaction 1-(5-phospho-beta-D-ribosyl)-5'-AMP + H2O = 1-(5-phospho-beta-D-ribosyl)-5-[(5-phospho-beta-D-ribosylamino)methylideneamino]imidazole-4-carboxamide. The protein operates within amino-acid biosynthesis; L-histidine biosynthesis; L-histidine from 5-phospho-alpha-D-ribose 1-diphosphate: step 3/9. In terms of biological role, catalyzes the hydrolysis of the adenine ring of phosphoribosyl-AMP. In Caulobacter vibrioides (strain ATCC 19089 / CIP 103742 / CB 15) (Caulobacter crescentus), this protein is Phosphoribosyl-AMP cyclohydrolase.